A 122-amino-acid polypeptide reads, in one-letter code: Large ribosomal subunit protein uL14c (122 aa).

It belongs to the universal ribosomal protein uL14 family. Part of the 50S ribosomal subunit.

The protein resides in the plastid. The protein localises to the chloroplast. Its function is as follows. Binds to 23S rRNA. In Lemna minor (Common duckweed), this protein is Large ribosomal subunit protein uL14c.